The primary structure comprises 153 residues: MIWVWPATGRGPGWWGIRRDPWGPEDSSCPCPRLPLSPTGPVGHSGPMGQCHPPVPSYRRGRRDQKDPPLRRQTSPPLPPHPWDRPLPWVPWIPLDLCRHGDPRHPWDPGAQSGYPRVREVRGVPADRPLRPCPRQGPRTAATRKESSCRIPS.

Disordered stretches follow at residues 24-87 (PEDS…DRPL) and 101-153 (GDPR…RIPS). Residues 27 to 37 (SSCPCPRLPLS) show a composition bias toward low complexity. A compositionally biased stretch (basic and acidic residues) spans 143 to 153 (TRKESSCRIPS).

This is an uncharacterized protein from Dryophytes versicolor (chameleon treefrog).